Reading from the N-terminus, the 122-residue chain is Small ribosomal subunit protein uS13 (122 aa).

Residues 97–122 are disordered; that stretch reads PVRGQRTHTNAKTRKGRSKLPIAGKK.

Belongs to the universal ribosomal protein uS13 family. Part of the 30S ribosomal subunit. Forms a loose heterodimer with protein S19. Forms two bridges to the 50S subunit in the 70S ribosome.

Functionally, located at the top of the head of the 30S subunit, it contacts several helices of the 16S rRNA. In the 70S ribosome it contacts the 23S rRNA (bridge B1a) and protein L5 of the 50S subunit (bridge B1b), connecting the 2 subunits; these bridges are implicated in subunit movement. Contacts the tRNAs in the A and P-sites. The protein is Small ribosomal subunit protein uS13 of Wolbachia pipientis subsp. Culex pipiens (strain wPip).